The chain runs to 467 residues: Retinoic acid receptor RXR-alpha (467 aa).

The tract at residues 1-112 (MDTKHFLPLD…MNPVSSTEDI (112 aa)) is disordered. Residues 1–139 (MDTKHFLPLD…GNMASFTKHI (139 aa)) are modulating domain. Residue Lys4 forms a Glycyl lysine isopeptide (Lys-Gly) (interchain with G-Cter in SUMO2) linkage. A compositionally biased stretch (polar residues) spans 11-25 (FSTQVNSSSLNSPTG). A phosphoserine mark is found at Ser22 and Ser28. Over residues 32–52 (PSLHPSLGPGIGSPLGSPGQL) the composition is skewed to low complexity. A compositionally biased stretch (polar residues) spans 54–63 (SPISTLSSPI). Phosphoserine; by MAPK8 and MAPK9 occurs at positions 61 and 75. Residues 83-109 (SVPTTPTLGFGTGSPQLNSPMNPVSST) are compositionally biased toward polar residues. Position 87 is a phosphothreonine; by MAPK8 and MAPK9 (Thr87). Lys113 is covalently cross-linked (Glycyl lysine isopeptide (Lys-Gly) (interchain with G-Cter in SUMO)). Phosphoserine is present on Ser134. Positions 140 and 143 each coordinate Zn(2+). Residues 140–160 (CAICGDRSSGKHYGVYSCEGC) form an NR C4-type zinc finger. A DNA-binding region (nuclear receptor) is located at residues 140 to 205 (CAICGDRSSG…RYQKCLAMGM (66 aa)). The residue at position 150 (Lys150) is an N6-acetyllysine. Positions 157 and 160 each coordinate Zn(2+). The tract at residues 165-170 (KRTVRK) is nuclear localization signal. Residues Cys176, Cys182, Cys192, and Cys195 each contribute to the Zn(2+) site. The NR C4-type zinc-finger motif lies at 176–200 (CRDNKDCLIDKRQRNRCQYCRYQKC). Positions 206 to 229 (KREAVQEERQRGKDRNENEVESTS) are hinge. Positions 211–223 (QEERQRGKDRNEN) are enriched in basic and acidic residues. Residues 211 to 233 (QEERQRGKDRNENEVESTSSANE) form a disordered region. Positions 232-463 (NEDMPVEKIL…TFLMEMLEAP (232 aa)) constitute an NR LBD domain. A Phosphoserine modification is found at Ser264. Ser265 bears the Phosphoserine; by MAPK8 and MAPK9 mark. 9-cis-retinoate is bound by residues Arg321 and Ala332. All-trans-retinoate contacts are provided by Arg321 and Ala332. The required for nuclear export stretch occupies residues 353 to 373 (RVLTELVSKMRDMQMDKTELG).

Belongs to the nuclear hormone receptor family. NR2 subfamily. As to quaternary structure, homodimer. Heterodimer with RARA; required for ligand-dependent retinoic acid receptor transcriptional activity. Heterodimer with PPARA (via the leucine-like zipper in the LBD); the interaction is required for PPARA transcriptional activity. Heterodimerizes with PPARG. Heterodimerizes (via NR LBD) with RARB. Heterodimerizes with NR1H4; the heterodimerization enhances the binding affinity for LXXLL motifs from coactivators. Interacts with coactivator NCO6. Interacts with coactivator NCO3. Interacts with coactivator FAM120B. Interacts with coactivator PELP1, SENP6, SFPQ, DNTTIP2 and RNF8. Interacts with PRMT2. Interacts with ASXL1. Interacts with BHLHE40/DEC1, BHLHE41/DEC2, NCOR1 and NCOR2. Interacts in a ligand-dependent fashion with MED1 and NCOA1. Interacts with VDR. Interacts with EP300; the interaction is decreased by 9-cis retinoic acid. Heterodimer (via C-terminus) with NR4A1 (via DNA-binding domain); the interaction is enhanced by 9-cis retinoic acid. NR4A1 competes with EP300 for interaction with RXRA and thereby attenuates EP300 mediated acetylation of RXRA. In the absence of hormonal ligand, interacts with TACC1. Interacts ith IGFBP3. In terms of processing, acetylated by EP300; acetylation enhances DNA binding and transcriptional activity. Post-translationally, phosphorylated on serine and threonine residues mainly in the N-terminal modulating domain. Constitutively phosphorylated on Ser-22 in the presence or absence of ligand. Under stress conditions, hyperphosphorylated by activated JNK on Ser-61, Ser-75, Thr-87 and Ser-265. Phosphorylated on Ser-28, in vitro, by PKA. This phosphorylation is required for repression of cAMP-mediated transcriptional activity of RARA. Ubiquitinated by UBR5, leading to its degradation: UBR5 specifically recognizes and binds ligand-bound RXRA when it is not associated with coactivators (NCOAs). In presence of NCOAs, the UBR5-degron is not accessible, preventing its ubiquitination and degradation. In terms of processing, sumoylation negatively regulates transcriptional activity. Desumoylated specifically by SENP6. Expressed in macrophages (at protein level).

The protein localises to the nucleus. It is found in the cytoplasm. The protein resides in the mitochondrion. Functionally, receptor for retinoic acid that acts as a transcription factor. Forms homo- or heterodimers with retinoic acid receptors (RARs) and binds to target response elements in response to their ligands, all-trans or 9-cis retinoic acid, to regulate gene expression in various biological processes. The RAR/RXR heterodimers bind to the retinoic acid response elements (RARE) composed of tandem 5'-AGGTCA-3' sites known as DR1-DR5 to regulate transcription. The high affinity ligand for retinoid X receptors (RXRs) is 9-cis retinoic acid. In the absence of ligand, the RXR-RAR heterodimers associate with a multiprotein complex containing transcription corepressors that induce histone deacetylation, chromatin condensation and transcriptional suppression. On ligand binding, the corepressors dissociate from the receptors and coactivators are recruited leading to transcriptional activation. Serves as a common heterodimeric partner for a number of nuclear receptors, such as RARA, RARB and PPARA. The RXRA/RARB heterodimer can act as a transcriptional repressor or transcriptional activator, depending on the RARE DNA element context. The RXRA/PPARA heterodimer is required for PPARA transcriptional activity on fatty acid oxidation genes such as ACOX1 and the P450 system genes. Together with RARA, positively regulates microRNA-10a expression, thereby inhibiting the GATA6/VCAM1 signaling response to pulsatile shear stress in vascular endothelial cells. Acts as an enhancer of RARA binding to RARE DNA element. May facilitate the nuclear import of heterodimerization partners such as VDR and NR4A1. Promotes myelin debris phagocytosis and remyelination by macrophages. Plays a role in the attenuation of the innate immune system in response to viral infections, possibly by negatively regulating the transcription of antiviral genes such as type I IFN genes. Involved in the regulation of calcium signaling by repressing ITPR2 gene expression, thereby controlling cellular senescence. The sequence is that of Retinoic acid receptor RXR-alpha (Rxra) from Mus musculus (Mouse).